The primary structure comprises 89 residues: Small ribosomal subunit protein uS15 (89 aa).

The protein belongs to the universal ribosomal protein uS15 family. As to quaternary structure, part of the 30S ribosomal subunit. Forms a bridge to the 50S subunit in the 70S ribosome, contacting the 23S rRNA.

Functionally, one of the primary rRNA binding proteins, it binds directly to 16S rRNA where it helps nucleate assembly of the platform of the 30S subunit by binding and bridging several RNA helices of the 16S rRNA. In terms of biological role, forms an intersubunit bridge (bridge B4) with the 23S rRNA of the 50S subunit in the ribosome. This is Small ribosomal subunit protein uS15 from Azorhizobium caulinodans (strain ATCC 43989 / DSM 5975 / JCM 20966 / LMG 6465 / NBRC 14845 / NCIMB 13405 / ORS 571).